The chain runs to 269 residues: MGQNDLMGTAEDFADQFLRVTKQYLPHVARLCLISTFLEDGIRMWFQWSEQRDYIDTTWNCGYLLASSFVFLNLLGQLTGCILVLSRNFVQYACFGLFGIIALQTIAYSILWDLKFLMRNLALGGGLLLLLAESRSEGKSMFAGVPTMRESSPKQYMQLGGRVLLVLMFMTLLHFDASFFSILQNIVGTALMILVAIGFKTKLAALTLVVWLFAINVYFNAFWTIPVYKPMHDFLKYDFFQTMSVIGGLLLVVALGPGGVSMDEKKKEW.

5 helical membrane passes run 64 to 84 (LLASSFVFLNLLGQLTGCILV), 92 to 112 (YACFGLFGIIALQTIAYSILW), 179 to 199 (FFSILQNIVGTALMILVAIGF), 203 to 223 (LAALTLVVWLFAINVYFNAFW), and 239 to 259 (FFQTMSVIGGLLLVVALGPGG). The short motif at 266 to 269 (KKEW) is the Di-lysine motif element.

Belongs to the SURF4 family. Found in a complex composed at least of SURF4, TMED2 and TMED10. May interact with LMAN1. Interacts with ZFYVE27 and with KIF5A in a ZFYVE27-dependent manner. Interacts with STING1. Interacts with SAR1B. Interacts with TMEM41B.

The protein resides in the endoplasmic reticulum membrane. It is found in the endoplasmic reticulum-Golgi intermediate compartment membrane. The protein localises to the golgi apparatus membrane. Endoplasmic reticulum cargo receptor that mediates the export of lipoproteins by recruiting cargos into COPII vesicles to facilitate their secretion. Acts as a cargo receptor for lipoproteins bearing both APOB and APOA1, thereby regulating lipoprotein delivery and the maintenance of lipid homeostasis. Synergizes with the GTPase SAR1B to mediate transport of circulating lipoproteins. Promotes the secretion of PCSK9. Also mediates the efficient secretion of erythropoietin (EPO). May also play a role in the maintenance of the architecture of the endoplasmic reticulum-Golgi intermediate compartment and of the Golgi. This is Surfeit locus protein 4 from Bos taurus (Bovine).